Reading from the N-terminus, the 74-residue chain is U19-theraphotoxin-Cg1a (74 aa).

The first 7 residues, 1-7 (IMFVWAS), serve as a signal peptide directing secretion. A propeptide spanning residues 8 to 36 (AAEVEERGSDQRDSPASLKSMETIFQSEQ) is cleaved from the precursor. Disulfide bonds link cysteine 39–cysteine 53, cysteine 46–cysteine 58, and cysteine 52–cysteine 66.

The protein belongs to the neurotoxin 10 (Hwtx-1) family. 38 (Jztx-33) subfamily. In terms of tissue distribution, expressed by the venom gland.

Its subcellular location is the secreted. Functionally, probable ion channel inhibitor. This Chilobrachys guangxiensis (Chinese earth tiger tarantula) protein is U19-theraphotoxin-Cg1a.